Reading from the N-terminus, the 94-residue chain is Protein S100-A1 (94 aa).

EF-hand domains follow at residues 13–48 and 50–85; these read INVF…FLDA and KDVD…LTVA. Ca(2+) is bound by residues lysine 28, glutamate 33, aspartate 63, asparagine 65, aspartate 67, glutamate 69, and glutamate 74. An S-nitrosocysteine modification is found at cysteine 86.

It belongs to the S-100 family. In terms of assembly, dimer of either two alpha chains, or two beta chains, or one alpha and one beta chain. Also forms heterodimers with S100P. Interacts with AGER. Interacts with CAPZA1. Interacts with FKBP4. Interacts with RYR1 and RYR2. Interacts with CACYBP in a calcium-dependent manner. Interacts with PPP5C (via TPR repeats); the interaction is calcium-dependent and modulates PPP5C activity. Interacts with ATP2A2 and PLN in a Ca(2+)-dependent manner. Interacts with mitochondrial F1-ATPase subunits ATP5F1A and ATP5F1B; these interactions increase F1-ATPase activity. Glutathionylated; glutathionylation increases affinity to calcium about 10-fold. As to expression, highly prevalent in heart. Also found in lesser quantities in skeletal muscle and brain.

The protein localises to the cytoplasm. The protein resides in the sarcoplasmic reticulum. It is found in the mitochondrion. Functionally, small calcium binding protein that plays important roles in several biological processes such as Ca(2+) homeostasis, chondrocyte biology and cardiomyocyte regulation. In response to an increase in intracellular Ca(2+) levels, binds calcium which triggers conformational changes. These changes allow interactions with specific target proteins and modulate their activity. Regulates a network in cardiomyocytes controlling sarcoplasmic reticulum Ca(2+) cycling and mitochondrial function through interaction with the ryanodine receptors RYR1 and RYR2, sarcoplasmic reticulum Ca(2+)-ATPase/ATP2A2 and mitochondrial F1-ATPase. Facilitates diastolic Ca(2+) dissociation and myofilament mechanics in order to improve relaxation during diastole. The protein is Protein S100-A1 (S100A1) of Homo sapiens (Human).